Reading from the N-terminus, the 149-residue chain is MRYNDKELQALSRQPAEMAAELGMRGPKKGSVVKRRLVKLVVNFLFYFRTDEAEPIGALLLEHCRVIHEEPNSFSISFLEDPERKYHFECCSEEQCQQWMAALRQASYEFMRRSLIFYRNEIQKMTGKDPLEQYGISEEARFQLSGLKA.

A PH domain is found at P15–Y108.

In Bos taurus (Bovine), this protein is Pleckstrin homology domain-containing family J member 1 (PLEKHJ1).